Here is a 292-residue protein sequence, read N- to C-terminus: 4-hydroxy-tetrahydrodipicolinate synthase (292 aa).

Thr-45 provides a ligand contact to pyruvate. The active-site Proton donor/acceptor is the Tyr-133. Lys-161 (schiff-base intermediate with substrate) is an active-site residue. Residue Ile-203 coordinates pyruvate.

It belongs to the DapA family. In terms of assembly, homotetramer; dimer of dimers.

The protein localises to the cytoplasm. It carries out the reaction L-aspartate 4-semialdehyde + pyruvate = (2S,4S)-4-hydroxy-2,3,4,5-tetrahydrodipicolinate + H2O + H(+). Its pathway is amino-acid biosynthesis; L-lysine biosynthesis via DAP pathway; (S)-tetrahydrodipicolinate from L-aspartate: step 3/4. Catalyzes the condensation of (S)-aspartate-beta-semialdehyde [(S)-ASA] and pyruvate to 4-hydroxy-tetrahydrodipicolinate (HTPA). The sequence is that of 4-hydroxy-tetrahydrodipicolinate synthase from Cronobacter sakazakii (strain ATCC BAA-894) (Enterobacter sakazakii).